The chain runs to 148 residues: MSTHKKKTRKLRGHVSHGHGRIGKHRKHPGGRGNAGGMHHHRINFDKYHPGYFGKLGMRNYHLRRNSKWAPAINLDKLWTLVSEQTRSKYQNHPEGKAPVIDIVKAGYYKLLGKGACLTNLSLLKPSFSLNRLEDKIKAVGGACVLSA.

Residues 1–30 (MSTHKKKTRKLRGHVSHGHGRIGKHRKHPG) show a composition bias toward basic residues. A disordered region spans residues 1–37 (MSTHKKKTRKLRGHVSHGHGRIGKHRKHPGGRGNAGG).

Belongs to the universal ribosomal protein uL15 family.

This is Large ribosomal subunit protein uL15 (RpL27A) from Tenebrio molitor (Yellow mealworm beetle).